Consider the following 1005-residue polypeptide: Regulator of telomere elongation helicase 1 homolog (1005 aa).

The 316-residue stretch at 7-322 (AGIPVHFPFE…KEMLLELEKA (316 aa)) folds into the Helicase ATP-binding domain. 42–49 (SPTGTGKT) serves as a coordination point for ATP. Residues cysteine 145, cysteine 163, cysteine 172, and cysteine 208 each contribute to the [4Fe-4S] cluster site. The DEAH box signature appears at 251–254 (DEAH). Phosphothreonine is present on threonine 876. The interval 893–917 (NGPLKTEPSEPATTSSSFCPTPAQS) is disordered.

The protein belongs to the helicase family. RAD3/XPD subfamily.

The protein localises to the nucleus. It carries out the reaction ATP + H2O = ADP + phosphate + H(+). In terms of biological role, a probable ATP-dependent DNA helicase implicated in DNA repair and the maintenance of genomic stability. Acts as an anti-recombinase to counteract toxic recombination and limit crossover during meiosis. Regulates meiotic recombination and crossover homeostasis by physically dissociating strand invasion events and thereby promotes noncrossover repair by meiotic synthesis dependent strand annealing (SDSA) as well as disassembly of D loop recombination intermediates. The chain is Regulator of telomere elongation helicase 1 homolog from Drosophila virilis (Fruit fly).